The primary structure comprises 576 residues: Flagellin B (576 aa).

Belongs to the bacterial flagellin family. As to quaternary structure, heteromer of FlaA and FlaB. Interacts with FliW. Interacts with FliS.

It is found in the secreted. The protein resides in the bacterial flagellum. Its function is as follows. Flagellin is the subunit protein which polymerizes to form the filaments of bacterial flagella. The protein is Flagellin B (flaB) of Campylobacter jejuni subsp. jejuni serotype O:6 (strain 81116 / NCTC 11828).